A 151-amino-acid polypeptide reads, in one-letter code: Putative pre-16S rRNA nuclease (151 aa).

This sequence belongs to the YqgF nuclease family.

Its subcellular location is the cytoplasm. Functionally, could be a nuclease involved in processing of the 5'-end of pre-16S rRNA. The protein is Putative pre-16S rRNA nuclease of Bifidobacterium longum subsp. infantis (strain ATCC 15697 / DSM 20088 / JCM 1222 / NCTC 11817 / S12).